The following is a 98-amino-acid chain: MSTIEQSAKGKKDGDIRYLTPLNIETNKTKKYCRFKKSGIKYIDYKDADFLLKFVNEQGKILPRRLTGTSLKYQRKVSVAVKRARHLALMPYVADLLK.

The protein belongs to the bacterial ribosomal protein bS18 family. As to quaternary structure, part of the 30S ribosomal subunit. Forms a tight heterodimer with protein bS6.

Binds as a heterodimer with protein bS6 to the central domain of the 16S rRNA, where it helps stabilize the platform of the 30S subunit. The sequence is that of Small ribosomal subunit protein bS18 from Flavobacterium johnsoniae (strain ATCC 17061 / DSM 2064 / JCM 8514 / BCRC 14874 / CCUG 350202 / NBRC 14942 / NCIMB 11054 / UW101) (Cytophaga johnsonae).